Consider the following 163-residue polypeptide: Endoribonuclease YbeY (163 aa).

H116, H120, and H126 together coordinate Zn(2+).

This sequence belongs to the endoribonuclease YbeY family. It depends on Zn(2+) as a cofactor.

Its subcellular location is the cytoplasm. In terms of biological role, single strand-specific metallo-endoribonuclease involved in late-stage 70S ribosome quality control and in maturation of the 3' terminus of the 16S rRNA. This Idiomarina loihiensis (strain ATCC BAA-735 / DSM 15497 / L2-TR) protein is Endoribonuclease YbeY.